Here is a 492-residue protein sequence, read N- to C-terminus: BTB/POZ domain and ankyrin repeat-containing protein NOOT2 (492 aa).

In terms of domain architecture, BTB spans 25–107 (SDVTFQVEGR…LYSGQVSIVP (83 aa)). The C2HC NPR-type zinc finger occupies 113 to 127 (RPNCGERGCWHTHCT). Zn(2+) is bound by residues Cys-116, Cys-121, His-123, and Cys-126. ANK repeat units lie at residues 248-277 (QKIRRMRRALDSSDVELVKLMVMGEGLNLD), 278-307 (EALALHYAVENCSREVVKALLELGAADVNY), 312-341 (AGKTSLHVAAEMVSPEMVAVLLDHHADPTV), and 345-379 (DGVTPLDILRTLTSDFLFKGAVPGLNHIEPNKLRL). Disordered stretches follow at residues 395–439 (ENNA…NSIG) and 455–492 (TQMGGDDDNRHNNSHREAMNRQGGHGCDPSMYHHSHDF). Low complexity-rich tracts occupy residues 397 to 413 (NASNNNNNNNNASSSAA) and 425 to 439 (SSSSGNNNNNNNSIG). Over residues 461-473 (DDNRHNNSHREAM) the composition is skewed to basic and acidic residues.

This sequence belongs to the plant 'ANKYRIN-BTB/POZ' family. 'NOOT-BOP-COCH-like' (NBCL) subfamily. In terms of assembly, homodimer.

The protein localises to the nucleus. The protein resides in the cytoplasm. Its subcellular location is the cell membrane. The protein operates within protein modification; protein ubiquitination. Its function is as follows. May act as a substrate-specific adapter of an E3 ubiquitin-protein ligase complex (CUL3-RBX1-BTB) which mediates the ubiquitination and subsequent proteasomal degradation of target proteins. Transcriptional co-regulator involved in the promotion of leaf and floral meristem fate and determinacy. Required for the abscission of senescent organs, probably by regulating the cell wall disorganization in abscission zones (AZs, e.g. pulvini at the base of leaves). Involved in the coordination of the symbiotic nodule developmental program; promotes the formation of root nodules by interacting directly with APP1 to modulate the expression of the nuclear transcription factor Y subunit (NF-YA1), a key nodulin. Involved in the regulation of indeterminate nodule identity in association with NOOT1. The sequence is that of BTB/POZ domain and ankyrin repeat-containing protein NOOT2 from Medicago truncatula (Barrel medic).